The primary structure comprises 92 residues: Small ribosomal subunit protein bS20 (92 aa).

The tract at residues 1 to 23 (MANTPSAKKRAKQAEKRRSHNAS) is disordered. The segment covering 7–20 (AKKRAKQAEKRRSH) has biased composition (basic residues).

This sequence belongs to the bacterial ribosomal protein bS20 family.

Its function is as follows. Binds directly to 16S ribosomal RNA. In Pseudomonas entomophila (strain L48), this protein is Small ribosomal subunit protein bS20.